We begin with the raw amino-acid sequence, 484 residues long: Chromosomal replication initiator protein DnaA (484 aa).

Residues Met1 to Thr73 are domain I, interacts with DnaA modulators. A domain II region spans residues Thr73–Pro140. The interval Phe141–Ile357 is domain III, AAA+ region. The ATP site is built by Gly185, Gly187, Lys188, and Thr189. A domain IV, binds dsDNA region spans residues Asp358–Lys484.

Belongs to the DnaA family. In terms of assembly, oligomerizes as a right-handed, spiral filament on DNA at oriC.

It is found in the cytoplasm. Its function is as follows. Plays an essential role in the initiation and regulation of chromosomal replication. ATP-DnaA binds to the origin of replication (oriC) to initiate formation of the DNA replication initiation complex once per cell cycle. Binds the DnaA box (a 9 base pair repeat at the origin) and separates the double-stranded (ds)DNA. Forms a right-handed helical filament on oriC DNA; dsDNA binds to the exterior of the filament while single-stranded (ss)DNA is stabiized in the filament's interior. The ATP-DnaA-oriC complex binds and stabilizes one strand of the AT-rich DNA unwinding element (DUE), permitting loading of DNA polymerase. After initiation quickly degrades to an ADP-DnaA complex that is not apt for DNA replication. Binds acidic phospholipids. In Borrelia hermsii (strain HS1 / DAH), this protein is Chromosomal replication initiator protein DnaA.